We begin with the raw amino-acid sequence, 73 residues long: MGSKCCKTIHGGIFSKAEDTLVDYKGKYINLEKEFSALSDTESEEELQLEKPLLNKQDSSVSLTQKKLENQSK.

Glycine 2 carries N-myristoyl glycine; by host lipidation.

The protein belongs to the herpesviridae cytoplasmic envelopment protein 3 family. In terms of assembly, interacts with cytoplasmic envelopment protein 2; this interaction is essential for the proper localization of each protein to the assembly complex and thus for the production of infectious virus. Myristoylation and palmitoylation (probably on one or more of the nearby cysteines at the N-terminus) enable membrane-binding and Golgi apparatus-specific targeting and are essential for efficient packaging. Post-translationally, phosphorylated. Phosphorylation does not seem to be required for recycling to the host Golgi apparatus. Packaging is selective for underphosphorylated forms.

Its subcellular location is the virion tegument. The protein resides in the virion membrane. It localises to the host cell membrane. The protein localises to the host Golgi apparatus membrane. Plays an important role in the cytoplasmic envelopment of tegument proteins and capsids during the assembly and egress processes. Also participates in viral entry at the fusion step probably by regulating the core fusion machinery. This is Cytoplasmic envelopment protein 3 (U71) from Homo sapiens (Human).